The primary structure comprises 153 residues: uncharacterized protein (153 aa).

This is an uncharacterized protein from Escherichia coli (strain K12).